A 175-amino-acid polypeptide reads, in one-letter code: DASH complex subunit DAM1 (175 aa).

The tract at residues 1 to 39 (MAPEDTNPQSSHRRTRSTSRSRPTTPLRPSSRSSFRSSA) is disordered. The segment covering 20-39 (RSRPTTPLRPSSRSSFRSSA) has biased composition (low complexity).

It belongs to the DASH complex DAM1 family. Component of the DASH complex consisting of ASK1, DAD1, DAD2, DAD3, DAD4, DAM1, DUO1, HSK3, SPC19 and SPC34, with a stoichiometry of one copy of each subunit per complex. Multiple DASH complexes oligomerize to form a ring that encircles spindle microtubules and organizes the rod-like NDC80 complexes of the outer kinetochore. DASH complex oligomerization strengthens microtubule attachments. On cytoplasmic microtubules, DASH complexes appear to form patches instead of rings.

It is found in the chromosome. It localises to the centromere. Its subcellular location is the kinetochore. The protein localises to the cytoplasm. The protein resides in the cytoskeleton. It is found in the spindle. It localises to the nucleus. Component of the DASH complex that connects microtubules with kinetochores and couples microtubule depolymerisation to chromosome movement; it is involved in retrieving kinetochores to the spindle poles before their re-orientation on the spindle in early mitosis and allows microtubule depolymerization to pull chromosomes apart and resist detachment during anaphase. Kinetochores, consisting of a centromere-associated inner segment and a microtubule-contacting outer segment, play a crucial role in chromosome segregation by mediating the physical connection between centromeric DNA and microtubules. Kinetochores also serve as an input point for the spindle assembly checkpoint, which delays anaphase until all chromosomes have bioriented on the mitotic spindle. The sequence is that of DASH complex subunit DAM1 from Chaetomium thermophilum (strain DSM 1495 / CBS 144.50 / IMI 039719) (Thermochaetoides thermophila).